We begin with the raw amino-acid sequence, 303 residues long: Putative monooxygenase p33MONOX (303 aa).

5 disordered regions span residues 1 to 20, 37 to 56, 66 to 96, 156 to 233, and 260 to 283; these read MASR…LGKM, LEDP…IPWK, HLDK…KAPV, KLQS…LQKS, and RVGE…GKKQ. T44 is subject to Phosphothreonine. The Flavin-containing monooxygenase motif motif lies at 67 to 77; that stretch reads LDKTEEGAASV. Polar residues predominate over residues 76-89; it reads SVSSLAVTPSPATD. The span at 170–183 shows a compositional bias: low complexity; it reads ASAQSTPSSTPHAS. T175 carries the post-translational modification Phosphothreonine. S183 bears the Phosphoserine mark.

This sequence belongs to the P33MONOX family. Interacts with NELFB, NOL12 and PRNP. As to expression, expressed in neuronal pyramidal cells of the hippocampus and in the neurons of the cortex.

It is found in the cytoplasm. Functionally, potential NADPH-dependent oxidoreductase. May be involved in the regulation of neuronal survival, differentiation and axonal outgrowth. This is Putative monooxygenase p33MONOX (P33monox) from Mus musculus (Mouse).